The following is a 20-amino-acid chain: Putative 18 kDa spermidine-binding protein (20 aa).

Dimer of 18 kDa and 60 kDa subunit.

The protein localises to the microsome membrane. Its subcellular location is the endoplasmic reticulum membrane. May have spermidine-binding activity. This chain is Putative 18 kDa spermidine-binding protein, found in Zea mays (Maize).